A 349-amino-acid polypeptide reads, in one-letter code: UDP-3-O-acylglucosamine N-acyltransferase (349 aa).

Histidine 246 serves as the catalytic Proton acceptor.

This sequence belongs to the transferase hexapeptide repeat family. LpxD subfamily. Homotrimer.

It carries out the reaction a UDP-3-O-[(3R)-3-hydroxyacyl]-alpha-D-glucosamine + a (3R)-hydroxyacyl-[ACP] = a UDP-2-N,3-O-bis[(3R)-3-hydroxyacyl]-alpha-D-glucosamine + holo-[ACP] + H(+). Its pathway is bacterial outer membrane biogenesis; LPS lipid A biosynthesis. Functionally, catalyzes the N-acylation of UDP-3-O-acylglucosamine using 3-hydroxyacyl-ACP as the acyl donor. Is involved in the biosynthesis of lipid A, a phosphorylated glycolipid that anchors the lipopolysaccharide to the outer membrane of the cell. The protein is UDP-3-O-acylglucosamine N-acyltransferase of Protochlamydia amoebophila (strain UWE25).